Reading from the N-terminus, the 186-residue chain is Mediator of RNA polymerase II transcription subunit 10a (186 aa).

Belongs to the Mediator complex subunit 10 family. In terms of assembly, mono-, di- and oligomers. Component of the Mediator complex. Interacts with GEBPL.

Its subcellular location is the nucleus. Its function is as follows. Component of the Mediator complex, a coactivator involved in the regulated transcription of nearly all RNA polymerase II-dependent genes. Mediator functions as a bridge to convey information from gene-specific regulatory proteins to the basal RNA polymerase II transcription machinery. The Mediator complex, having a compact conformation in its free form, is recruited to promoters by direct interactions with regulatory proteins and serves for the assembly of a functional pre-initiation complex with RNA polymerase II and the general transcription factors. The polypeptide is Mediator of RNA polymerase II transcription subunit 10a (Arabidopsis thaliana (Mouse-ear cress)).